Here is a 437-residue protein sequence, read N- to C-terminus: MQKRHPIIYLLITLLIFVPVSYGALDLELTKGVTAAIPIAIMPFAGPSVLAPGDETIPQVIKNDLQNSGQFRVTGSGNLDQTAASLEQIDYSYWRKQKVNALVVGAINPLGMRRYRVAFTLINVFDSNNRLLSESFNVNAKELRNLAHHISDLIYQKLTGVRGVFSTKIAYVLVQASSENTAAKYTLEVADADGFNPQPLLVSDMPIMSPTWSPDGNKIAYVSFEGHRAAIYLQDLATGRRQRLSEAPGINGAPAFSPDGKQLALVLTKTGNPKIYILNLADGHLREITKGWSIDTEPAWSPDGKSLLFTSNRDGTPQIYNYSFADGSINRVTYRGDYNARPSFMPDGKSIIMMHRENGLFGIARQDLSTGQVQILSESGTDESPSLAPNGKMAIYAMEYGGRGVLAQVSIDGQIKLRLPARNGNVQEPAWSPYLGV.

An N-terminal signal peptide occupies residues 1-23; it reads MQKRHPIIYLLITLLIFVPVSYG.

This sequence belongs to the TolB family. As to quaternary structure, the Tol-Pal system is composed of five core proteins: the inner membrane proteins TolA, TolQ and TolR, the periplasmic protein TolB and the outer membrane protein Pal. They form a network linking the inner and outer membranes and the peptidoglycan layer.

The protein resides in the periplasm. In terms of biological role, part of the Tol-Pal system, which plays a role in outer membrane invagination during cell division and is important for maintaining outer membrane integrity. This is Tol-Pal system protein TolB from Coxiella burnetii (strain RSA 493 / Nine Mile phase I).